The sequence spans 279 residues: Thymidylate synthase (279 aa).

Position 133–134 (Arg-133–Arg-134) interacts with dUMP. Cys-154 (nucleophile) is an active-site residue. DUMP contacts are provided by residues Arg-178–Asp-181, Asn-189, and His-219–Tyr-221. Asp-181 provides a ligand contact to (6R)-5,10-methylene-5,6,7,8-tetrahydrofolate. Residue Ala-278 participates in (6R)-5,10-methylene-5,6,7,8-tetrahydrofolate binding.

It belongs to the thymidylate synthase family. Bacterial-type ThyA subfamily. As to quaternary structure, homodimer.

Its subcellular location is the cytoplasm. It carries out the reaction dUMP + (6R)-5,10-methylene-5,6,7,8-tetrahydrofolate = 7,8-dihydrofolate + dTMP. It functions in the pathway pyrimidine metabolism; dTTP biosynthesis. Catalyzes the reductive methylation of 2'-deoxyuridine-5'-monophosphate (dUMP) to 2'-deoxythymidine-5'-monophosphate (dTMP) while utilizing 5,10-methylenetetrahydrofolate (mTHF) as the methyl donor and reductant in the reaction, yielding dihydrofolate (DHF) as a by-product. This enzymatic reaction provides an intracellular de novo source of dTMP, an essential precursor for DNA biosynthesis. In Streptococcus agalactiae serotype Ia (strain ATCC 27591 / A909 / CDC SS700), this protein is Thymidylate synthase.